We begin with the raw amino-acid sequence, 128 residues long: Fluoride-specific ion channel FluC (128 aa).

The next 4 membrane-spanning stretches (helical) occupy residues 1–21 (MPER…GATA), 45–65 (LAGC…SLVS), 70–90 (LLLA…MYEI), and 99–119 (IFYS…CLYF). The Na(+) site is built by Gly78 and Thr81.

It belongs to the fluoride channel Fluc/FEX (TC 1.A.43) family.

The protein resides in the cell inner membrane. It carries out the reaction fluoride(in) = fluoride(out). Na(+) is not transported, but it plays an essential structural role and its presence is essential for fluoride channel function. Its function is as follows. Fluoride-specific ion channel. Important for reducing fluoride concentration in the cell, thus reducing its toxicity. The chain is Fluoride-specific ion channel FluC from Chlorobium phaeobacteroides (strain BS1).